The following is a 518-amino-acid chain: MALLTGNADRAFSSYSFNKLENLCEVQTKKGFFYRKAKLLHPDEDLCYLARLDDRTRFVIINVGGIKYKVPWTTLENCPLTRLGKLKSCNNYDEIMNICDDYDVSCNEFFFDRNPSAFRTIMTFLTAGKLRLLREMCALSFQEELVYWGIEEDHLEWCCKKRLQQKEEEAAEARMYEGEMMFSETTQCAFQDNNWLSLCMRNLRDMVENPHSGIPGKIFACISISFVAITAVSLCISTMPDVREEEDRGECSQKCYDIFVLETVCVAWFSFEFLLRSIQAENKCAFLKTPLNIIDILAILPFYISLIVDMASTKNSSKPGGGAGNKYLERVGLVLRFLRALRILYVMRLARHSLGLQTLGLTVRRCTREFGLLLLFLCVAMALFSPLVYLAESELGAKQEFTSIPTSYWWAVISMTTVGYGDMVPRSIPGQVVALSSILSGILLMAFPVTSIFHTFSRSYSELKEQQQRAASRQMHQLEESTKLAGGGSSQWITAASPPDAAREDGRPELDQEAKRSC.

Residues 1 to 214 are Cytoplasmic-facing; the sequence is MALLTGNADR…DMVENPHSGI (214 aa). The chain crosses the membrane as a helical span at residues 215 to 236; it reads PGKIFACISISFVAITAVSLCI. Topologically, residues 237 to 257 are extracellular; sequence STMPDVREEEDRGECSQKCYD. Residues 258-279 form a helical membrane-spanning segment; it reads IFVLETVCVAWFSFEFLLRSIQ. The Cytoplasmic segment spans residues 280-290; that stretch reads AENKCAFLKTP. Residues 291 to 311 traverse the membrane as a helical segment; sequence LNIIDILAILPFYISLIVDMA. Over 312 to 331 the chain is Extracellular; the sequence is STKNSSKPGGGAGNKYLERV. A helical; Voltage-sensor transmembrane segment spans residues 332–352; sequence GLVLRFLRALRILYVMRLARH. Residues 353–367 are Cytoplasmic-facing; it reads SLGLQTLGLTVRRCT. The chain crosses the membrane as a helical span at residues 368–389; that stretch reads REFGLLLLFLCVAMALFSPLVY. Residues 390-404 are Extracellular-facing; the sequence is LAESELGAKQEFTSI. Positions 405–416 form an intramembrane region, helical; it reads PTSYWWAVISMT. Positions 417 to 422 match the Selectivity filter motif; it reads TVGYGD. Residues 417 to 424 lie within the membrane without spanning it; it reads TVGYGDMV. Residues 425-431 lie on the Extracellular side of the membrane; that stretch reads PRSIPGQ. The chain crosses the membrane as a helical span at residues 432-460; sequence VVALSSILSGILLMAFPVTSIFHTFSRSY. Topologically, residues 461–518 are cytoplasmic; the sequence is SELKEQQQRAASRQMHQLEESTKLAGGGSSQWITAASPPDAAREDGRPELDQEAKRSC. The tract at residues 473 to 518 is disordered; it reads RQMHQLEESTKLAGGGSSQWITAASPPDAAREDGRPELDQEAKRSC. Residues 501–518 are compositionally biased toward basic and acidic residues; sequence AAREDGRPELDQEAKRSC.

Belongs to the potassium channel family. G (TC 1.A.1.2) subfamily. Kv6.2/KCNG2 sub-subfamily. Heterodimer with KCNB1.

Its subcellular location is the cell membrane. Its function is as follows. Regulatory alpha-subunit of the voltage-gated potassium (Kv) channel which, when coassembled with KCNB1, can modulate the kinetics and conductance-voltage relationship. Modulates channel activity by shifting the threshold and the half-maximal activation to more negative values. Potassium channel subunit that does not form functional channels by itself. This Gallus gallus (Chicken) protein is Voltage-gated potassium channel regulatory subunit KCNG2.